Reading from the N-terminus, the 395-residue chain is S-adenosylmethionine synthase (395 aa).

Position 14 (H14) interacts with ATP. Position 16 (D16) interacts with Mg(2+). E42 lines the K(+) pocket. 2 residues coordinate L-methionine: E55 and Q98. Positions 98 to 108 are flexible loop; sequence QSPDIALGVDK. ATP is bound by residues 174 to 176, 240 to 241, D249, 255 to 256, A272, and K276; these read DGK, RF, and RK. D249 lines the L-methionine pocket. K280 contributes to the L-methionine binding site.

The protein belongs to the AdoMet synthase family. In terms of assembly, homotetramer; dimer of dimers. Mg(2+) serves as cofactor. It depends on K(+) as a cofactor.

It localises to the cytoplasm. The catalysed reaction is L-methionine + ATP + H2O = S-adenosyl-L-methionine + phosphate + diphosphate. It functions in the pathway amino-acid biosynthesis; S-adenosyl-L-methionine biosynthesis; S-adenosyl-L-methionine from L-methionine: step 1/1. Functionally, catalyzes the formation of S-adenosylmethionine (AdoMet) from methionine and ATP. The overall synthetic reaction is composed of two sequential steps, AdoMet formation and the subsequent tripolyphosphate hydrolysis which occurs prior to release of AdoMet from the enzyme. The protein is S-adenosylmethionine synthase of Thermotoga neapolitana (strain ATCC 49049 / DSM 4359 / NBRC 107923 / NS-E).